Reading from the N-terminus, the 343-residue chain is Signal peptide peptidase 1 (343 aa).

At M1–P19 the chain is on the lumenal side. A helical membrane pass occupies residues L20–V40. At G41–R62 the chain is on the cytoplasmic side. A helical membrane pass occupies residues F63 to K83. At D84–N87 the chain is on the lumenal side. The chain crosses the membrane as a helical span at residues A88–P108. The Cytoplasmic portion of the chain corresponds to S109–E136. The helical transmembrane segment at F137 to A157 threads the bilayer. Topologically, residues K158–H160 are lumenal. A helical transmembrane segment spans residues W161 to L181. Topologically, residues G182–A188 are cytoplasmic. Residues I189–V209 form a helical membrane-spanning segment. D198 is an active-site residue. The Lumenal portion of the chain corresponds to S210–R230. Residues P231–L251 traverse the membrane as a helical segment. D239 is an active-site residue. Topologically, residues R252–S266 are cytoplasmic. The chain crosses the membrane as a helical span at residues A267–A287. Over A288–P290 the chain is Lumenal. Residues P290–L292 carry the PAL motif. A helical membrane pass occupies residues A291–G311. The Cytoplasmic portion of the chain corresponds to E312–E343. Residues S322 to E343 form a disordered region. Acidic residues predominate over residues A324–T334. The Endoplasmic reticulum targeting signal signature appears at K340–E343.

It belongs to the peptidase A22B family. Ubiquitous.

The protein resides in the endoplasmic reticulum membrane. In terms of biological role, intramembrane-cleaving aspartic protease (I-CLiP) that cleaves type II membrane signal peptides in the hydrophobic plane of the membrane. Catalyzes intramembrane proteolysis of some signal peptides after they have been cleaved from a preprotein, resulting in the release of the fragment from the ER membrane into the cytoplasm. The protein is Signal peptide peptidase 1 (SPP1) of Oryza sativa subsp. japonica (Rice).